Reading from the N-terminus, the 473-residue chain is Hexaprenyl pyrophosphate synthase, mitochondrial (473 aa).

Residues Lys-84, Arg-87, and His-186 each contribute to the isopentenyl diphosphate site. Asp-193 and Asp-197 together coordinate Mg(2+). Arg-202 provides a ligand contact to an all-trans-polyprenyl diphosphate. Position 203 (Arg-203) interacts with isopentenyl diphosphate. An all-trans-polyprenyl diphosphate is bound by residues Lys-323, Thr-324, Gln-361, and Lys-378.

This sequence belongs to the FPP/GGPP synthase family. Mg(2+) serves as cofactor.

The protein localises to the mitochondrion inner membrane. Its pathway is cofactor biosynthesis; ubiquinone biosynthesis. Functionally, assembly of polyisoprenoid side chains. The polyprenyl synthase of coenzyme Q biosynthesis catalyzes the formation from isopentenyl diphosphate of all trans-polyprenyl pyrophosphates generally ranging in length of between 6 and 10 isoprene units depending on the species. In Saccharomyces cerevisiae (strain ATCC 204508 / S288c) (Baker's yeast), this protein is Hexaprenyl pyrophosphate synthase, mitochondrial (COQ1).